Reading from the N-terminus, the 190-residue chain is Large ribosomal subunit protein eL15 (190 aa).

It belongs to the eukaryotic ribosomal protein eL15 family.

The sequence is that of Large ribosomal subunit protein eL15 (rpl15e) from Nanoarchaeum equitans (strain Kin4-M).